A 424-amino-acid polypeptide reads, in one-letter code: Zinc metalloproteinase-disintegrin-like brevilysin H2b (424 aa).

The residue at position 1 (Q1) is a Pyrrolidone carboxylic acid. The 199-residue stretch at 9 to 207 (RYVKLAIVAD…YKPQCILNEP (199 aa)) folds into the Peptidase M12B domain. Residue N69 is glycosylated (N-linked (GlcNAc...) asparagine). Ca(2+) is bound at residue D96. 3 cysteine pairs are disulfide-bonded: C120–C202, C164–C186, and C166–C169. A Zn(2+)-binding site is contributed by H145. Residue E146 is part of the active site. 2 residues coordinate Zn(2+): H149 and H155. N-linked (GlcNAc...) asparagine glycosylation is present at N185. Residues C202, N205, V217, N220, L222, E224, E227, and D230 each coordinate Ca(2+). Positions 215 to 301 (PPVCGNELLE…DCPTDDLQRN (87 aa)) constitute a Disintegrin domain. Disulfide bonds link C218-C247, C229-C242, C231-C237, C241-C264, C255-C261, C260-C286, C273-C293, C280-C312, C305-C317, C324-C374, C339-C385, C352-C362, C369-C411, and C405-C417. A D/ECD-tripeptide motif is present at residues 279-281 (DCD). Residues D281, E284, and D296 each coordinate Ca(2+).

It belongs to the venom metalloproteinase (M12B) family. P-III subfamily. P-IIIa sub-subfamily. In terms of assembly, monomer. Zn(2+) is required as a cofactor. Post-translationally, glycosylated. As to expression, expressed by the venom gland.

It is found in the secreted. Its proteolytic activity is inhibited by EDTA, TPEN, 1,10-phenanthroline, and some thiol compounds, but is enhanced by alkaline earth metal ions (Mg2+, Ca2+, Sr2+, and Ba2+). Its activity is not modulated by urea (4 M). In terms of biological role, non-hemorrhagic metalloproteinase that degrades fibrinogen. The alpha chain (FGA) is rapidly degraded, the beta chain (FGB) is degraded very slowly, while the gamma chain is left intact. Shows a prefential cleavage at X-Leu bonds. Cleaves insulin B chain at '29-His-|-Leu-30', '33-Ser-|-His-34', '38-Ala-|-Leu-39' and '40-Tyr-|-Leu-41' bonds. The protein is Zinc metalloproteinase-disintegrin-like brevilysin H2b of Gloydius brevicauda (Korean slamosa snake).